Reading from the N-terminus, the 258-residue chain is Indole-3-glycerol phosphate synthase (258 aa).

The protein belongs to the TrpC family.

It catalyses the reaction 1-(2-carboxyphenylamino)-1-deoxy-D-ribulose 5-phosphate + H(+) = (1S,2R)-1-C-(indol-3-yl)glycerol 3-phosphate + CO2 + H2O. The protein operates within amino-acid biosynthesis; L-tryptophan biosynthesis; L-tryptophan from chorismate: step 4/5. The chain is Indole-3-glycerol phosphate synthase from Legionella pneumophila (strain Paris).